The primary structure comprises 453 residues: UDP-N-acetylmuramoylalanine--D-glutamate ligase (453 aa).

Residue 120–126 (GSNGKST) participates in ATP binding.

The protein belongs to the MurCDEF family.

Its subcellular location is the cytoplasm. It carries out the reaction UDP-N-acetyl-alpha-D-muramoyl-L-alanine + D-glutamate + ATP = UDP-N-acetyl-alpha-D-muramoyl-L-alanyl-D-glutamate + ADP + phosphate + H(+). Its pathway is cell wall biogenesis; peptidoglycan biosynthesis. Functionally, cell wall formation. Catalyzes the addition of glutamate to the nucleotide precursor UDP-N-acetylmuramoyl-L-alanine (UMA). The chain is UDP-N-acetylmuramoylalanine--D-glutamate ligase from Teredinibacter turnerae (strain ATCC 39867 / T7901).